The sequence spans 313 residues: 4-diphosphocytidyl-2-C-methyl-D-erythritol kinase (313 aa).

Lys27 is an active-site residue. Position 110-120 (110-120) interacts with ATP; that stretch reads PIGGGVGGGSS. Asp152 is a catalytic residue.

Belongs to the GHMP kinase family. IspE subfamily.

The catalysed reaction is 4-CDP-2-C-methyl-D-erythritol + ATP = 4-CDP-2-C-methyl-D-erythritol 2-phosphate + ADP + H(+). It participates in isoprenoid biosynthesis; isopentenyl diphosphate biosynthesis via DXP pathway; isopentenyl diphosphate from 1-deoxy-D-xylulose 5-phosphate: step 3/6. In terms of biological role, catalyzes the phosphorylation of the position 2 hydroxy group of 4-diphosphocytidyl-2C-methyl-D-erythritol. In Histophilus somni (strain 129Pt) (Haemophilus somnus), this protein is 4-diphosphocytidyl-2-C-methyl-D-erythritol kinase.